The primary structure comprises 503 residues: Guanosine-5'-triphosphate,3'-diphosphate pyrophosphatase (503 aa).

The protein belongs to the GppA/Ppx family. GppA subfamily.

It carries out the reaction guanosine 3'-diphosphate 5'-triphosphate + H2O = guanosine 3',5'-bis(diphosphate) + phosphate + H(+). Its pathway is purine metabolism; ppGpp biosynthesis; ppGpp from GTP: step 2/2. In terms of biological role, catalyzes the conversion of pppGpp to ppGpp. Guanosine pentaphosphate (pppGpp) is a cytoplasmic signaling molecule which together with ppGpp controls the 'stringent response', an adaptive process that allows bacteria to respond to amino acid starvation, resulting in the coordinated regulation of numerous cellular activities. The protein is Guanosine-5'-triphosphate,3'-diphosphate pyrophosphatase of Pseudoalteromonas atlantica (strain T6c / ATCC BAA-1087).